A 965-amino-acid polypeptide reads, in one-letter code: Isoleucine--tRNA ligase (965 aa).

The short motif at 68 to 78 (PYANGSLHMGH) is the 'HIGH' region element. Glu-582 serves as a coordination point for L-isoleucyl-5'-AMP. The short motif at 623–627 (KMSKS) is the 'KMSKS' region element. Residue Lys-626 coordinates ATP. Zn(2+) contacts are provided by Cys-936, Cys-939, Cys-956, and Cys-959.

The protein belongs to the class-I aminoacyl-tRNA synthetase family. IleS type 1 subfamily. As to quaternary structure, monomer. Zn(2+) serves as cofactor.

The protein resides in the cytoplasm. The enzyme catalyses tRNA(Ile) + L-isoleucine + ATP = L-isoleucyl-tRNA(Ile) + AMP + diphosphate. In terms of biological role, catalyzes the attachment of isoleucine to tRNA(Ile). As IleRS can inadvertently accommodate and process structurally similar amino acids such as valine, to avoid such errors it has two additional distinct tRNA(Ile)-dependent editing activities. One activity is designated as 'pretransfer' editing and involves the hydrolysis of activated Val-AMP. The other activity is designated 'posttransfer' editing and involves deacylation of mischarged Val-tRNA(Ile). This is Isoleucine--tRNA ligase from Prochlorococcus marinus (strain MIT 9515).